Here is a 496-residue protein sequence, read N- to C-terminus: Apolipoprotein N-acyltransferase (496 aa).

The next 6 membrane-spanning stretches (helical) occupy residues 6–26 (IICL…FFIP), 50–70 (FGYL…SIGV), 77–97 (FWWA…FFIS), 114–134 (LIFC…LTGL), 148–168 (ILIQ…VIYI), and 183–203 (LKIL…YGAV). Positions 220–464 (VQPSIPQTAK…QGLIPQKLTT (245 aa)) constitute a CN hydrolase domain. Catalysis depends on glutamate 259, which acts as the Proton acceptor. The active site involves lysine 322. Catalysis depends on cysteine 372, which acts as the Nucleophile. Residues 474-494 (FAMLLSIVFIILIHYLLSLIF) form a helical membrane-spanning segment.

It belongs to the CN hydrolase family. Apolipoprotein N-acyltransferase subfamily.

Its subcellular location is the cell inner membrane. It carries out the reaction N-terminal S-1,2-diacyl-sn-glyceryl-L-cysteinyl-[lipoprotein] + a glycerophospholipid = N-acyl-S-1,2-diacyl-sn-glyceryl-L-cysteinyl-[lipoprotein] + a 2-acyl-sn-glycero-3-phospholipid + H(+). It participates in protein modification; lipoprotein biosynthesis (N-acyl transfer). In terms of biological role, catalyzes the phospholipid dependent N-acylation of the N-terminal cysteine of apolipoprotein, the last step in lipoprotein maturation. The polypeptide is Apolipoprotein N-acyltransferase (Rickettsia prowazekii (strain Madrid E)).